The following is a 319-amino-acid chain: Glutathione synthetase (319 aa).

The ATP-grasp domain maps to 125–311 (EKLFATLFPQ…IGGLLMDAIE (187 aa)). Residue 151 to 208 (FAEQQGDVILKPLDGMGGASIFRHRAGDPNLSVILETLTAHGTQQIMAQGYLPAIKDG) participates in ATP binding. Mg(2+)-binding residues include Glu-282 and Asn-284.

Belongs to the prokaryotic GSH synthase family. Mg(2+) serves as cofactor. Requires Mn(2+) as cofactor.

It carries out the reaction gamma-L-glutamyl-L-cysteine + glycine + ATP = glutathione + ADP + phosphate + H(+). The protein operates within sulfur metabolism; glutathione biosynthesis; glutathione from L-cysteine and L-glutamate: step 2/2. The sequence is that of Glutathione synthetase from Pseudomonas syringae pv. tomato (strain ATCC BAA-871 / DC3000).